A 143-amino-acid polypeptide reads, in one-letter code: Deoxyuridine 5'-triphosphate nucleotidohydrolase (143 aa).

Substrate is bound by residues 63–65 (RSG), N76, 80–82 (TID), and K90.

This sequence belongs to the dUTPase family. Requires Mg(2+) as cofactor.

It carries out the reaction dUTP + H2O = dUMP + diphosphate + H(+). Its pathway is pyrimidine metabolism; dUMP biosynthesis; dUMP from dCTP (dUTP route): step 2/2. This enzyme is involved in nucleotide metabolism: it produces dUMP, the immediate precursor of thymidine nucleotides and it decreases the intracellular concentration of dUTP so that uracil cannot be incorporated into DNA. The sequence is that of Deoxyuridine 5'-triphosphate nucleotidohydrolase from Finegoldia magna (strain ATCC 29328 / DSM 20472 / WAL 2508) (Peptostreptococcus magnus).